The primary structure comprises 4383 residues: Replicase polyprotein 1a (4383 aa).

The region spanning 54 to 196 (PENHVMVDCR…PWVMYLRKRG (143 aa)) is the CoV Nsp1 globular domain. A BetaCoV Nsp1 C-terminal domain is found at 216–246 (FKVEDAYDQVHDEPKGKFSKKAYALIRGYRG). The CoV Nsp2 N-terminal domain occupies 250–514 (LLYVDQYGCD…VKETNLICKA (265 aa)). The Zn(2+) site is built by cysteine 392, cysteine 397, cysteine 413, and cysteine 416. A C4 region spans residues 392 to 416 (CEQDSCDFKGWIPGNMIDGFACTTC). Residues 524–713 (CGNLHQRELL…AQAFQSVAKV (190 aa)) form the CoV Nsp2 middle domain. Residues 733–851 (RRRICLSGRK…LDQAWRVPCA (119 aa)) form the CoV Nsp2 C-terminal domain. In terms of domain architecture, Ubiquitin-like 1 spans 853–966 (RRVTFKEQPT…LYCAFTAPED (114 aa)). Residues 995-1025 (PCVASEQEESSEVLEDTLDDGPSVETSDSQV) are disordered. Over residues 1000 to 1013 (EQEESSEVLEDTLD) the composition is skewed to acidic residues. The 239-residue stretch at 1036–1274 (DLESVIQDYE…IAQLYGSCIT (239 aa)) folds into the Peptidase C16 1 domain. The active-site For PL1-PRO activity is cysteine 1074. Zn(2+)-binding residues include cysteine 1151, cysteine 1154, cysteine 1177, and cysteine 1179. The C4-type 1 zinc finger occupies 1151-1179 (CIKCDLALKLKGLDAMFFYGDVVSHICKC). Active-site for PL1-PRO activity residues include histidine 1225 and aspartate 1236. Positions 1275 to 1435 (PNVCFVKGDI…LISKCQITAV (161 aa)) constitute a Macro domain. The DPUP domain occupies 1491–1563 (DDARTFVQSN…VAQIKALFLD (73 aa)). A Ubiquitin-like 2 domain is found at 1562–1617 (LDKVDILLTVDGVNFTNRFVPVGESFGKSLGNVFCDGVNVTKHKCDINYKGKVFFQ). Positions 1631–1892 (SSFNFDQKEL…KIEYKPDLSQ (262 aa)) constitute a Peptidase C16 2 domain. The active-site For PL2-PRO activity is cysteine 1671. The Zn(2+) site is built by cysteine 1749, cysteine 1751, cysteine 1783, and cysteine 1785. The segment at 1749 to 1785 (CKCGVKQEQRTGLDAVMHFGTLSREDLEIGYTVDCSC) adopts a C4-type 2 zinc-finger fold. Residues histidine 1828 and aspartate 1842 each act as for PL2-PRO activity in the active site. Residues 1906–2007 (IKAQFKTFEK…TYFNRPLLVD (102 aa)) form the Nucleic acid-binding domain. The 150-residue stretch at 2020–2169 (DDSGDSSESG…ADNKVIYTTE (150 aa)) folds into the G2M domain. The next 3 helical transmembrane spans lie at 2138 to 2158 (TSAC…WIKI), 2199 to 2219 (ACII…NVIF), and 2221 to 2241 (DFYL…AQWI). Residues 2138–2385 (TSACFNFIKW…ASFIKLFSLF (248 aa)) are HD1. The region spanning 2235 to 2296 (GKIAQWIKNT…AIDVVQYEAD (62 aa)) is the 3Ecto domain. 2 disulfides stabilise this stretch: cysteine 2251-cysteine 2275 and cysteine 2266-cysteine 2272. 3 consecutive transmembrane segments (helical) span residues 2313–2333 (LIVS…LISI), 2343–2363 (LFML…ANML), and 2365–2385 (AHVF…FSLF). Residues 2383 to 2473 (SLFKHVAYGC…ELKRPIQPTD (91 aa)) are Y1. Residues 2383–2750 (SLFKHVAYGC…LTTPFSLKGG (368 aa)) form the CoV Nsp3 Y domain. Zn(2+) is bound by residues histidine 2387, cysteine 2392, cysteine 2397, cysteine 2400, cysteine 2433, histidine 2436, cysteine 2440, and cysteine 2443. The segment at 2387-2400 (HVAYGCSKSGCLFC) is ZF1. The interval 2433–2443 (CSKHQWNCIDC) is ZF2. The Y2 stretch occupies residues 2474–2566 (VAYHTVTDVK…MVDKNLITTA (93 aa)). The interval 2474–2750 (VAYHTVTDVK…LTTPFSLKGG (277 aa)) is coV-Y. The segment at 2567–2649 (NTGTSVTETM…DSVMSAVSAG (83 aa)) is Y3. The interval 2650-2750 (LELTDESCNN…LTTPFSLKGG (101 aa)) is Y4. The next 7 membrane-spanning stretches (helical) occupy residues 2752–2772 (VFSY…IGLW), 2824–2844 (STFG…VAVI), 3009–3029 (VFDL…FLAL), 3031–3051 (ASSI…YYLI), 3063–3083 (VVFV…VFQV), 3090–3110 (VYAI…SVIM), and 3115–3135 (LVMY…AVVV). An HD2 region spans residues 2752–3135 (VFSYFVYVCF…FCLLYIAVVV (384 aa)). The Nsp4C domain maps to 3149–3246 (LGTSVRSDGT…TASVSTSFLQ (98 aa)). The 303-residue stretch at 3247 to 3549 (SGIVKMVNPT…YQQLAGIKLQ (303 aa)) folds into the Peptidase C30 domain. Catalysis depends on for 3CL-PRO activity residues histidine 3287 and cysteine 3391. The tract at residues 3319-3775 (LSLTVMSYQM…IISCYWGLFS (457 aa)) is HD3. Transmembrane regions (helical) follow at residues 3558–3578 (GTVC…TAFV), 3588–3608 (TNMF…MLLV), 3615–3635 (LTMY…LVVY), 3657–3677 (TYTD…FVTL), 3684–3704 (LFSF…WYKG), 3711–3731 (ILLM…LSMA), and 3755–3775 (IVLL…GLFS). One can recognise a RdRp Nsp7 cofactor domain in the interval 3837 to 3925 (SKLTDVKCAN…DYAKDNTVLQ (89 aa)). Residues 3926–4122 (ALQSEFVNMA…YNEVSATVLQ (197 aa)) form the RdRp Nsp8 cofactor domain. The Nsp9 ssRNA-binding domain maps to 4123–4232 (NNELMPAKLK…GTISSTVRLQ (110 aa)). The ExoN/MTase coactivator domain occupies 4233–4370 (AGTATEYASN…CVSTDTTVQS (138 aa)). Residues cysteine 4306, cysteine 4309, histidine 4315, cysteine 4322, cysteine 4348, cysteine 4351, cysteine 4359, and cysteine 4361 each coordinate Zn(2+). Zinc fingers lie at residues 4306 to 4322 (CIYC…DGLC) and 4348 to 4361 (CRVC…SCSC).

The protein belongs to the coronaviruses polyprotein 1ab family. In terms of assembly, 3CL-PRO exists as monomer and homodimer. Eight copies of nsp7 and eight copies of nsp8 assemble to form a heterohexadecamer. Nsp9 is a dimer. Nsp10 forms a dodecamer. Post-translationally, specific enzymatic cleavages in vivo by its own proteases yield mature proteins. 3CL-PRO and PL-PRO proteinases are autocatalytically processed.

It localises to the host membrane. The protein resides in the host cytoplasm. The protein localises to the host perinuclear region. The enzyme catalyses Thiol-dependent hydrolysis of ester, thioester, amide, peptide and isopeptide bonds formed by the C-terminal Gly of ubiquitin (a 76-residue protein attached to proteins as an intracellular targeting signal).. It carries out the reaction TSAVLQ-|-SGFRK-NH2 and SGVTFQ-|-GKFKK the two peptides corresponding to the two self-cleavage sites of the SARS 3C-like proteinase are the two most reactive peptide substrates. The enzyme exhibits a strong preference for substrates containing Gln at P1 position and Leu at P2 position.. The catalysed reaction is a 5'-end diphospho-ribonucleoside in mRNA + GTP + H(+) = a 5'-end (5'-triphosphoguanosine)-ribonucleoside in mRNA + diphosphate. Its function is as follows. The papain-like proteinase 1 (PL1-PRO) and papain-like proteinase 2 (PL2-PRO) are responsible for the cleavages located at the N-terminus of the replicase polyprotein. In addition, PLP2 possesses a deubiquitinating/deISGylating activity and processes both 'Lys-48'- and 'Lys-63'-linked polyubiquitin chains from cellular substrates. Antagonizes innate immune induction of type I interferon by blocking the phosphorylation, dimerization and subsequent nuclear translocation of host IRF-3. In terms of biological role, responsible for the majority of cleavages as it cleaves the C-terminus of replicase polyprotein at 11 sites. Recognizes substrates containing the core sequence [ILMVF]-Q-|-[SGACN]. Inhibited by the substrate-analog Cbz-Val-Asn-Ser-Thr-Leu-Gln-CMK. Also contains an ADP-ribose-1''-phosphate (ADRP)-binding function. Functionally, nsp7-nsp8 hexadecamer may possibly confer processivity to the polymerase, maybe by binding to dsRNA or by producing primers utilized by the latter. Catalytic subunit of viral RNA capping enzyme which catalyzes the RNA guanylyltransferase reaction for genomic and sub-genomic RNAs. The kinase-like NiRAN domain of NSP12 transfers RNA to the amino terminus of NSP9, forming a covalent RNA-protein intermediate. Subsequently, the NiRAN domain transfers RNA to GDP, forming the core cap structure GpppA-RNA. The NSP14 and NSP16 methyltransferases then add methyl groups to form functional cap structures. Its function is as follows. Binds to the 40S ribosomal subunit and inhibits host translation. The nsp1-40S ribosome complex further induces an endonucleolytic cleavage near the 5'UTR of host mRNAs, targeting them for degradation. This inhibits the integrated stress response (ISR) in the infected cell by preventing EIF2S1/eIF2-alpha phosphorylation upstream of stress granule formation and depletes host G3BP1. By suppressing host gene expression, nsp1 facilitates efficient viral gene expression in infected cells and evasion from host immune response. In Human coronavirus OC43 (HCoV-OC43), this protein is Replicase polyprotein 1a.